We begin with the raw amino-acid sequence, 479 residues long: Bifunctional protein HldE (479 aa).

The segment at 1–319 is ribokinase; it reads MTVILPDFLK…NVVQKYEYTK (319 aa). Residue 195–198 participates in ATP binding; sequence NMSE. D264 is a catalytic residue. Positions 346–479 are cytidylyltransferase; that stretch reads MTNGVFDILH…IDTMEINEIN (134 aa).

This sequence in the N-terminal section; belongs to the carbohydrate kinase PfkB family. In the C-terminal section; belongs to the cytidylyltransferase family. In terms of assembly, homodimer.

It carries out the reaction D-glycero-beta-D-manno-heptose 7-phosphate + ATP = D-glycero-beta-D-manno-heptose 1,7-bisphosphate + ADP + H(+). The catalysed reaction is D-glycero-beta-D-manno-heptose 1-phosphate + ATP + H(+) = ADP-D-glycero-beta-D-manno-heptose + diphosphate. It functions in the pathway nucleotide-sugar biosynthesis; ADP-L-glycero-beta-D-manno-heptose biosynthesis; ADP-L-glycero-beta-D-manno-heptose from D-glycero-beta-D-manno-heptose 7-phosphate: step 1/4. The protein operates within nucleotide-sugar biosynthesis; ADP-L-glycero-beta-D-manno-heptose biosynthesis; ADP-L-glycero-beta-D-manno-heptose from D-glycero-beta-D-manno-heptose 7-phosphate: step 3/4. Catalyzes the phosphorylation of D-glycero-D-manno-heptose 7-phosphate at the C-1 position to selectively form D-glycero-beta-D-manno-heptose-1,7-bisphosphate. Its function is as follows. Catalyzes the ADP transfer from ATP to D-glycero-beta-D-manno-heptose 1-phosphate, yielding ADP-D-glycero-beta-D-manno-heptose. The protein is Bifunctional protein HldE of Blochmanniella floridana.